A 182-amino-acid chain; its full sequence is MQTEHVILLNAQGVPTGTLEKYAAHTADTLLHLAFSSWLFNAKGQLLVTRRALSKKAWPGVWTNSVCGHPQLGESNAEAVIRRCRYELGVEITPPESIYPGFRYRATDPNGIVENEVCPVFAALTTSALQINDDEVMDYQWCDLAAVLRGIDATPWAFSPWMVMQATNREARKRLSAFTQLK.

Positions 25 and 32 each coordinate Mn(2+). Positions 30 to 164 (LLHLAFSSWL…PWAFSPWMVM (135 aa)) constitute a Nudix hydrolase domain. Residue Cys67 is part of the active site. His69 contacts Mn(2+). Glu87 lines the Mg(2+) pocket. Residues Glu114 and Glu116 each contribute to the Mn(2+) site. The active site involves Glu116.

This sequence belongs to the IPP isomerase type 1 family. In terms of assembly, homodimer. Mg(2+) is required as a cofactor. Mn(2+) serves as cofactor.

Its subcellular location is the cytoplasm. The catalysed reaction is isopentenyl diphosphate = dimethylallyl diphosphate. Its pathway is isoprenoid biosynthesis; dimethylallyl diphosphate biosynthesis; dimethylallyl diphosphate from isopentenyl diphosphate: step 1/1. Its function is as follows. Catalyzes the 1,3-allylic rearrangement of the homoallylic substrate isopentenyl (IPP) to its highly electrophilic allylic isomer, dimethylallyl diphosphate (DMAPP). The protein is Isopentenyl-diphosphate Delta-isomerase of Escherichia coli O127:H6 (strain E2348/69 / EPEC).